Consider the following 236-residue polypeptide: 2-phospho-L-lactate guanylyltransferase (236 aa).

Belongs to the CofC family. As to quaternary structure, homodimer.

The enzyme catalyses (2S)-2-phospholactate + GTP + H(+) = (2S)-lactyl-2-diphospho-5'-guanosine + diphosphate. The protein operates within cofactor biosynthesis; coenzyme F420 biosynthesis. Its function is as follows. Guanylyltransferase that catalyzes the activation of (2S)-2-phospholactate (2-PL) as (2S)-lactyl-2-diphospho-5'-guanosine, via the condensation of 2-PL with GTP. It is involved in the biosynthesis of coenzyme F420, a hydride carrier cofactor. The sequence is that of 2-phospho-L-lactate guanylyltransferase from Natrialba magadii (strain ATCC 43099 / DSM 3394 / CCM 3739 / CIP 104546 / IAM 13178 / JCM 8861 / NBRC 102185 / NCIMB 2190 / MS3) (Natronobacterium magadii).